A 417-amino-acid polypeptide reads, in one-letter code: NADH-quinone oxidoreductase subunit D (417 aa).

It belongs to the complex I 49 kDa subunit family. As to quaternary structure, NDH-1 is composed of 14 different subunits. Subunits NuoB, C, D, E, F, and G constitute the peripheral sector of the complex.

The protein resides in the cell inner membrane. It carries out the reaction a quinone + NADH + 5 H(+)(in) = a quinol + NAD(+) + 4 H(+)(out). Its function is as follows. NDH-1 shuttles electrons from NADH, via FMN and iron-sulfur (Fe-S) centers, to quinones in the respiratory chain. The immediate electron acceptor for the enzyme in this species is believed to be ubiquinone. Couples the redox reaction to proton translocation (for every two electrons transferred, four hydrogen ions are translocated across the cytoplasmic membrane), and thus conserves the redox energy in a proton gradient. The polypeptide is NADH-quinone oxidoreductase subunit D (Cupriavidus necator (strain ATCC 17699 / DSM 428 / KCTC 22496 / NCIMB 10442 / H16 / Stanier 337) (Ralstonia eutropha)).